Consider the following 145-residue polypeptide: UPF0310 protein PH1033 (145 aa).

It belongs to the UPF0310 family.

This Pyrococcus horikoshii (strain ATCC 700860 / DSM 12428 / JCM 9974 / NBRC 100139 / OT-3) protein is UPF0310 protein PH1033.